Reading from the N-terminus, the 156-residue chain is Endoribonuclease YbeY (156 aa).

3 residues coordinate Zn(2+): H105, H109, and D115.

The protein belongs to the endoribonuclease YbeY family. Zn(2+) serves as cofactor.

The protein localises to the cytoplasm. Functionally, single strand-specific metallo-endoribonuclease involved in late-stage 70S ribosome quality control and in maturation of the 3' terminus of the 16S rRNA. This Chlorobium chlorochromatii (strain CaD3) protein is Endoribonuclease YbeY.